Consider the following 484-residue polypeptide: UDP-N-acetylmuramate--L-alanine ligase (484 aa).

126–132 serves as a coordination point for ATP; it reads GTHGKTT.

Belongs to the MurCDEF family.

The protein localises to the cytoplasm. The catalysed reaction is UDP-N-acetyl-alpha-D-muramate + L-alanine + ATP = UDP-N-acetyl-alpha-D-muramoyl-L-alanine + ADP + phosphate + H(+). It functions in the pathway cell wall biogenesis; peptidoglycan biosynthesis. In terms of biological role, cell wall formation. The protein is UDP-N-acetylmuramate--L-alanine ligase of Aeromonas hydrophila subsp. hydrophila (strain ATCC 7966 / DSM 30187 / BCRC 13018 / CCUG 14551 / JCM 1027 / KCTC 2358 / NCIMB 9240 / NCTC 8049).